The chain runs to 732 residues: Polyribonucleotide nucleotidyltransferase (732 aa).

The Mg(2+) site is built by Asp502 and Asp508. One can recognise a KH domain in the interval 569-628 (PRLTSIQIPVDAIGMVIGKGGETIRSITEETGAEINIDDDGTVTIACSSPEGTKAAVETI). The region spanning 638-712 (GTIYMGKVRD…GKTKFALSIK (75 aa)) is the S1 motif domain.

This sequence belongs to the polyribonucleotide nucleotidyltransferase family. The cofactor is Mg(2+).

The protein localises to the cytoplasm. It carries out the reaction RNA(n+1) + phosphate = RNA(n) + a ribonucleoside 5'-diphosphate. Functionally, involved in mRNA degradation. Catalyzes the phosphorolysis of single-stranded polyribonucleotides processively in the 3'- to 5'-direction. The protein is Polyribonucleotide nucleotidyltransferase of Chlorobaculum parvum (strain DSM 263 / NCIMB 8327) (Chlorobium vibrioforme subsp. thiosulfatophilum).